A 425-amino-acid chain; its full sequence is Serine--tRNA ligase (425 aa).

Thr-231–Glu-233 provides a ligand contact to L-serine. Arg-262–Glu-264 provides a ligand contact to ATP. Position 285 (Glu-285) interacts with L-serine. Residue Glu-349 to Ser-352 coordinates ATP. Ser-385 contributes to the L-serine binding site.

Belongs to the class-II aminoacyl-tRNA synthetase family. Type-1 seryl-tRNA synthetase subfamily. Homodimer. The tRNA molecule binds across the dimer.

The protein localises to the cytoplasm. The enzyme catalyses tRNA(Ser) + L-serine + ATP = L-seryl-tRNA(Ser) + AMP + diphosphate + H(+). It carries out the reaction tRNA(Sec) + L-serine + ATP = L-seryl-tRNA(Sec) + AMP + diphosphate + H(+). It participates in aminoacyl-tRNA biosynthesis; selenocysteinyl-tRNA(Sec) biosynthesis; L-seryl-tRNA(Sec) from L-serine and tRNA(Sec): step 1/1. Functionally, catalyzes the attachment of serine to tRNA(Ser). Is also able to aminoacylate tRNA(Sec) with serine, to form the misacylated tRNA L-seryl-tRNA(Sec), which will be further converted into selenocysteinyl-tRNA(Sec). This chain is Serine--tRNA ligase, found in Exiguobacterium sibiricum (strain DSM 17290 / CCUG 55495 / CIP 109462 / JCM 13490 / 255-15).